Reading from the N-terminus, the 101-residue chain is Small ribosomal subunit protein uS14 (101 aa).

The segment at 1 to 21 (MAKTSSVEKNNRRRKLADQYG) is disordered.

The protein belongs to the universal ribosomal protein uS14 family. Part of the 30S ribosomal subunit. Contacts proteins S3 and S10.

Its function is as follows. Binds 16S rRNA, required for the assembly of 30S particles and may also be responsible for determining the conformation of the 16S rRNA at the A site. The protein is Small ribosomal subunit protein uS14 of Mesorhizobium japonicum (strain LMG 29417 / CECT 9101 / MAFF 303099) (Mesorhizobium loti (strain MAFF 303099)).